We begin with the raw amino-acid sequence, 185 residues long: Ribosome-recycling factor (185 aa).

This sequence belongs to the RRF family.

The protein resides in the cytoplasm. In terms of biological role, responsible for the release of ribosomes from messenger RNA at the termination of protein biosynthesis. May increase the efficiency of translation by recycling ribosomes from one round of translation to another. The sequence is that of Ribosome-recycling factor from Geobacillus kaustophilus (strain HTA426).